A 556-amino-acid polypeptide reads, in one-letter code: Non-structural maintenance of chromosome element 5 (556 aa).

In terms of assembly, component of the Smc5-Smc6 complex which consists of KRE29, MMS21, NSE1, NSE3, NSE4, NSE5, SMC5 and SMC6. Interacts with KRE29.

It localises to the nucleus. Its subcellular location is the chromosome. Functionally, acts in a DNA repair pathway for removal of UV-induced DNA damage that is distinct from classical nucleotide excision repair and in repair of ionizing radiation damage. Functions in homologous recombination repair of DNA double strand breaks and in recovery of stalled replication forks. In Saccharomyces cerevisiae (strain ATCC 204508 / S288c) (Baker's yeast), this protein is Non-structural maintenance of chromosome element 5 (NSE5).